Consider the following 91-residue polypeptide: Ragulator complex protein LAMTOR5 homolog (91 aa).

It belongs to the LAMTOR5 family. In terms of assembly, part of the Ragulator complex.

Its subcellular location is the cytoplasm. The protein localises to the lysosome. Regulator of the TOR pathway, a signaling cascade that promotes cell growth in response to growth factors, energy levels, and amino acids. As part of the Ragulator complex, may activate the TOR signaling cascade in response to amino acids. The sequence is that of Ragulator complex protein LAMTOR5 homolog from Ixodes scapularis (Black-legged tick).